Reading from the N-terminus, the 73-residue chain is Putative defensin-like protein 42 (73 aa).

Intrachain disulfides connect C6/C58, C18/C41, C27/C50, and C31/C52.

This sequence belongs to the DEFL family.

In Arabidopsis thaliana (Mouse-ear cress), this protein is Putative defensin-like protein 42.